Here is a 583-residue protein sequence, read N- to C-terminus: Inactive tyrosine-protein kinase RYK (583 aa).

An N-terminal signal peptide occupies residues 1–18; that stretch reads MILRYLIFFAQLWALCLA. At 19-173 the chain is on the extracellular side; the sequence is NVNMFISKEE…EVDDTDSIDK (155 aa). Positions 22 to 147 constitute a WIF domain; sequence MFISKEEMNR…KVKLRQEKIC (126 aa). Asn-30 and Asn-46 each carry an N-linked (GlcNAc...) asparagine glycan. A disulfide bridge connects residues Cys-113 and Cys-147. A helical membrane pass occupies residues 174–194; that stretch reads AFFVIICIAAAFLLIVAATLI. Residues 195 to 583 lie on the Cytoplasmic side of the membrane; that stretch reads CYFKRSKKED…DFNIQLSQYI (389 aa). One can recognise a Protein kinase domain in the interval 281 to 583; sequence FQSLPLDMEG…DFNIQLSQYI (303 aa). Residues 287–295 and Lys-327 each bind ATP; that span reads DMEGTFGEV.

It belongs to the protein kinase superfamily. Tyr protein kinase family.

The protein localises to the cell membrane. It localises to the basolateral cell membrane. In terms of biological role, has no detectable kinase activity in vitro and is unlikely to function as a tyrosine kinase in vivo. Receptor which may act as a receptor for Wnt ligand mom-2. Plays a role in controlling P7.p vulva precursor cell lineage orientation during vulva development. Regulates pop-1 asymmetric distribution in P7.p and its daughter cells. Plays a role in the migration of ALM neurons during embryogenesis. In Caenorhabditis elegans, this protein is Inactive tyrosine-protein kinase RYK.